The primary structure comprises 456 residues: tRNA modification GTPase MnmE (456 aa).

(6S)-5-formyl-5,6,7,8-tetrahydrofolate is bound by residues Arg-24, Glu-81, and Lys-120. In terms of domain architecture, TrmE-type G spans 216–379 (GMTVVIAGRP…LREHLKACMG (164 aa)). Position 226 (Asn-226) interacts with K(+). Residues 226–231 (NAGKSS), 245–251 (TEIAGTT), 270–273 (DTAG), 335–338 (NKAD), and 359–361 (SAR) contribute to the GTP site. Ser-230 provides a ligand contact to Mg(2+). 3 residues coordinate K(+): Thr-245, Ile-247, and Thr-250. Mg(2+) is bound at residue Thr-251. Lys-456 serves as a coordination point for (6S)-5-formyl-5,6,7,8-tetrahydrofolate.

It belongs to the TRAFAC class TrmE-Era-EngA-EngB-Septin-like GTPase superfamily. TrmE GTPase family. Homodimer. Heterotetramer of two MnmE and two MnmG subunits. Requires K(+) as cofactor.

It is found in the cytoplasm. Its function is as follows. Exhibits a very high intrinsic GTPase hydrolysis rate. Involved in the addition of a carboxymethylaminomethyl (cmnm) group at the wobble position (U34) of certain tRNAs, forming tRNA-cmnm(5)s(2)U34. The chain is tRNA modification GTPase MnmE from Pseudomonas syringae pv. syringae (strain B728a).